The sequence spans 275 residues: Ribosomal RNA small subunit methyltransferase A (275 aa).

6 residues coordinate S-adenosyl-L-methionine: N19, L21, G46, E71, D94, and N117.

The protein belongs to the class I-like SAM-binding methyltransferase superfamily. rRNA adenine N(6)-methyltransferase family. RsmA subfamily.

The protein resides in the cytoplasm. The catalysed reaction is adenosine(1518)/adenosine(1519) in 16S rRNA + 4 S-adenosyl-L-methionine = N(6)-dimethyladenosine(1518)/N(6)-dimethyladenosine(1519) in 16S rRNA + 4 S-adenosyl-L-homocysteine + 4 H(+). Functionally, specifically dimethylates two adjacent adenosines (A1518 and A1519) in the loop of a conserved hairpin near the 3'-end of 16S rRNA in the 30S particle. May play a critical role in biogenesis of 30S subunits. The protein is Ribosomal RNA small subunit methyltransferase A of Burkholderia lata (strain ATCC 17760 / DSM 23089 / LMG 22485 / NCIMB 9086 / R18194 / 383).